The sequence spans 134 residues: Acyl-CoA thioester hydrolase YbgC (134 aa).

Residue aspartate 18 is part of the active site.

It belongs to the 4-hydroxybenzoyl-CoA thioesterase family.

The protein resides in the cell inner membrane. Its function is as follows. Thioesterase that appears to be involved in phospholipid metabolism. Some specific acyl-ACPs could be physiological substrates. Displays acyl-CoA thioesterase activity on malonyl-CoA in vitro, catalyzing the hydrolysis of the thioester bond. The sequence is that of Acyl-CoA thioester hydrolase YbgC (ybgC) from Escherichia coli O157:H7.